A 394-amino-acid chain; its full sequence is DNA primase large subunit PriL (394 aa).

[4Fe-4S] cluster contacts are provided by cysteine 231, cysteine 340, cysteine 351, and cysteine 357.

It belongs to the eukaryotic-type primase large subunit family. Heterodimer of a small subunit (PriS) and a large subunit (PriL). [4Fe-4S] cluster serves as cofactor.

In terms of biological role, regulatory subunit of DNA primase, an RNA polymerase that catalyzes the synthesis of short RNA molecules used as primers for DNA polymerase during DNA replication. Stabilizes and modulates the activity of the small subunit, increasing the rate of DNA synthesis, and conferring RNA synthesis capability. The DNA polymerase activity may enable DNA primase to also catalyze primer extension after primer synthesis. May also play a role in DNA repair. The chain is DNA primase large subunit PriL from Pyrococcus horikoshii (strain ATCC 700860 / DSM 12428 / JCM 9974 / NBRC 100139 / OT-3).